The chain runs to 101 residues: Small ribosomal subunit protein uS10 (101 aa).

Belongs to the universal ribosomal protein uS10 family. As to quaternary structure, part of the 30S ribosomal subunit.

Its function is as follows. Involved in the binding of tRNA to the ribosomes. This chain is Small ribosomal subunit protein uS10, found in Cytophaga hutchinsonii (strain ATCC 33406 / DSM 1761 / CIP 103989 / NBRC 15051 / NCIMB 9469 / D465).